The following is a 609-amino-acid chain: UvrABC system protein C (609 aa).

The GIY-YIG domain maps to 16-94 (SSAGVYRMYD…IKQYMPKYNV (79 aa)). One can recognise a UVR domain in the interval 203 to 238 (KQVISELVAKMEEAAEQQAYEQAARFRDQIMALRRV).

This sequence belongs to the UvrC family. In terms of assembly, interacts with UvrB in an incision complex.

Its subcellular location is the cytoplasm. The UvrABC repair system catalyzes the recognition and processing of DNA lesions. UvrC both incises the 5' and 3' sides of the lesion. The N-terminal half is responsible for the 3' incision and the C-terminal half is responsible for the 5' incision. The chain is UvrABC system protein C from Shewanella sp. (strain MR-4).